A 143-amino-acid chain; its full sequence is Hemoglobin subunit alpha-2 (143 aa).

N-acetylserine is present on Ser2. The Globin domain occupies 2–143; it reads SLSSKDKATV…LALALSEKYR (142 aa). Residue His60 participates in O2 binding. His89 is a heme b binding site.

This sequence belongs to the globin family. As to quaternary structure, hb 2 is a heterotetramer of two alpha-2 and two beta-1 chains. Hb 3 is a heterotetramer of two alpha-2 and two beta-2 chains. Red blood cells.

Involved in oxygen transport from gills to the various peripheral tissues. This is Hemoglobin subunit alpha-2 (hba2) from Arctogadus glacialis (Arctic cod).